The following is a 285-amino-acid chain: Chlorite dismutase (285 aa).

An N-terminal signal peptide occupies residues Met1–Pro38. Glu105 is a Ca(2+) binding site. His205 is a heme binding site. The active-site Proton acceptor is Arg218. 2 residues coordinate Ca(2+): Asp227 and Thr266.

It belongs to the chlorite dismutase family. Homopentamer. Requires heme b as cofactor.

It localises to the periplasm. The enzyme catalyses chloride + O2 = chlorite. Its function is as follows. Catalyzes the heme-dependent decomposition of chlorite to O(2) and chloride with high efficiency and specificity. Used to detoxify chlorite, a by-product of the reduction of perchlorate, a primarily anthropogenic pollutant, in perchlorate-respiring bacteria. In Ideonella dechloratans, this protein is Chlorite dismutase (cld).